The sequence spans 4499 residues: Dynein alpha chain, flagellar outer arm (4499 aa).

The interval 1–1677 is stem; that stretch reads MSIFWEVPNA…RIRICDASFP (1677 aa). Kelch repeat units lie at residues 29–84, 86–135, 137–183, 199–245, 253–304, and 307–358; these read RFVL…ALDD, RLLV…RFGS, VFIF…RFDH, KLLI…VCDG, KVFS…FDVK, and SLLI…IRGL. One copy of the Filamin repeat lies at 425–534; sequence FANTAARNCI…IRGSPFTVKC (110 aa). 2 Kelch repeats span residues 562–608 and 610–661; these read ELVL…VLSD and ELVV…AVSA. The interval 653–720 is disordered; the sequence is PKGAAAVSAE…SRPVSAKPAP (68 aa). A compositionally biased stretch (low complexity) spans 655–689; sequence GAAAVSAEPSAEPAAEPAAEPAAEPDADAPAAEPA. Residues 690 to 705 are compositionally biased toward acidic residues; the sequence is AEGEEGAVPAEGEEGA. Kelch repeat units follow at residues 750 to 801 and 864 to 913; these read LYVM…ATGN and KLFL…TLSG. Coiled-coil stretches lie at residues 1261 to 1334 and 1382 to 1450; these read ELHK…MIAN and KKEL…RRAF. AAA stretches follow at residues 1678 to 1921 and 1981 to 2225; these read YGYE…VLVV and DVIV…KSYS. ATP is bound by residues 1716–1723 and 2019–2026; these read GPAGTGKT and GPTGTGRT. Residues 2269 to 2317 form a Kelch 11 repeat; it reads MIWAFGGGLVEKDGIPYRRNFDKWFKQTWTTVKIPGKGTVYDYFVNPKT. 2 AAA regions span residues 2331 to 2577 and 2679 to 2928; these read DYDG…VFQG and EYNE…ERRY. 2369–2376 is an ATP binding site; it reads GGAGVGKT. A coiled-coil region spans residues 2655–2688; that stretch reads LADKAYDEVADYTSLYKTLTEALNEYNETNAAMD. 2717 to 2724 provides a ligand contact to ATP; the sequence is GVGGSGKQ. The stretch at 3003–3023 forms a coiled coil; it reads VGVEKEKVNAENAAAQVEAEK. The interval 3003 to 3262 is stalk; sequence VGVEKEKVNA…ERWALTVEQL (260 aa). The stretch at 3070-3117 is one Kelch 12 repeat; it reads LKKPPPGVDDITAVVIILLENNPKDKSWQAAQKLMNNVDKFLERVKSF. 2 coiled-coil regions span residues 3170-3262 and 3486-3515; these read DVVQ…VEQL and NKER…ELED. An AAA 5 region spans residues 3320–3550; the sequence is LVDDALVAGW…AKRVSTEISE (231 aa). Positions 3614–3687 are disordered; that stretch reads GRKKGKGLKK…VGDAEDEDDE (74 aa). A compositionally biased stretch (basic and acidic residues) spans 3630-3653; that stretch reads QPMDHQSLMEKARRSSGVGDRRPS. Residues 3843 to 4082 are AAA 6; the sequence is LQNFCEHMMG…LTTCGDVLYN (240 aa).

The protein belongs to the dynein heavy chain family. Consists of at least 3 heavy chains (alpha, beta and gamma), 2 intermediate chains and 8 light chains.

It localises to the cell projection. The protein resides in the cilium. It is found in the flagellum. The protein localises to the cytoplasm. Its subcellular location is the cytoskeleton. It localises to the flagellum axoneme. Its function is as follows. Force generating protein of eukaryotic cilia and flagella. Produces force towards the minus ends of microtubules. Dynein has ATPase activity; the force-producing power stroke is thought to occur on release of ADP. The chain is Dynein alpha chain, flagellar outer arm (ODA11) from Chlamydomonas reinhardtii (Chlamydomonas smithii).